The primary structure comprises 290 residues: Pyridoxal kinase PdxY (290 aa).

Substrate is bound by residues S12 and 47 to 48 (TQ). ATP-binding positions include D114, E151, K184, and 211–214 (RPLL). Residue D225 participates in substrate binding.

This sequence belongs to the pyridoxine kinase family. PdxY subfamily. In terms of assembly, homodimer. Mg(2+) is required as a cofactor.

The catalysed reaction is pyridoxal + ATP = pyridoxal 5'-phosphate + ADP + H(+). The protein operates within cofactor metabolism; pyridoxal 5'-phosphate salvage; pyridoxal 5'-phosphate from pyridoxal: step 1/1. In terms of biological role, pyridoxal kinase involved in the salvage pathway of pyridoxal 5'-phosphate (PLP). Catalyzes the phosphorylation of pyridoxal to PLP. This chain is Pyridoxal kinase PdxY, found in Pseudomonas fluorescens (strain ATCC BAA-477 / NRRL B-23932 / Pf-5).